We begin with the raw amino-acid sequence, 200 residues long: Protein GrpE (200 aa).

It belongs to the GrpE family. Homodimer.

The protein resides in the cytoplasm. Functionally, participates actively in the response to hyperosmotic and heat shock by preventing the aggregation of stress-denatured proteins, in association with DnaK and GrpE. It is the nucleotide exchange factor for DnaK and may function as a thermosensor. Unfolded proteins bind initially to DnaJ; upon interaction with the DnaJ-bound protein, DnaK hydrolyzes its bound ATP, resulting in the formation of a stable complex. GrpE releases ADP from DnaK; ATP binding to DnaK triggers the release of the substrate protein, thus completing the reaction cycle. Several rounds of ATP-dependent interactions between DnaJ, DnaK and GrpE are required for fully efficient folding. In Geobacter sulfurreducens (strain ATCC 51573 / DSM 12127 / PCA), this protein is Protein GrpE.